The following is a 305-amino-acid chain: Tyrosine recombinase XerC (305 aa).

The Core-binding (CB) domain maps to Thr-4 to Glu-95. The 183-residue stretch at Leu-116 to Thr-298 folds into the Tyr recombinase domain. Active-site residues include Arg-159, Lys-182, His-250, Arg-253, and His-276. Tyr-285 (O-(3'-phospho-DNA)-tyrosine intermediate) is an active-site residue.

Belongs to the 'phage' integrase family. XerC subfamily. Forms a cyclic heterotetrameric complex composed of two molecules of XerC and two molecules of XerD.

It localises to the cytoplasm. Its function is as follows. Site-specific tyrosine recombinase, which acts by catalyzing the cutting and rejoining of the recombining DNA molecules. The XerC-XerD complex is essential to convert dimers of the bacterial chromosome into monomers to permit their segregation at cell division. It also contributes to the segregational stability of plasmids. The chain is Tyrosine recombinase XerC from Rickettsia conorii (strain ATCC VR-613 / Malish 7).